A 312-amino-acid polypeptide reads, in one-letter code: Olfactory receptor 51B5 (312 aa).

Topologically, residues 1 to 23 are extracellular; that stretch reads MSSSGSSHPFLLTGFPGLEEAHH. A helical transmembrane segment spans residues 24-44; sequence WISVFFLFMYISILFGNGTLL. Residues 45 to 52 lie on the Cytoplasmic side of the membrane; sequence LLIKEDHN. A helical membrane pass occupies residues 53-73; that stretch reads LHEPMYFFLAMLAATDLGLAL. Residues 74-97 are Extracellular-facing; that stretch reads TTMPTVLGVLWLDHREIGSAACFS. C95 and C187 form a disulfide bridge. The chain crosses the membrane as a helical span at residues 98-118; the sequence is QAYFIHSLSFLESGILLAMAY. At 119–137 the chain is on the cytoplasmic side; it reads DRFIAICNPLRYTSVLTNT. The chain crosses the membrane as a helical span at residues 138-158; it reads RVVKIGLGVLMRGFVSVVPPI. At 159–194 the chain is on the extracellular side; that stretch reads RPLYFFLYCHSHVLSHAFCLHQDVIKLACADTTFNR. Residues 195–215 form a helical membrane-spanning segment; it reads LYPAVLVVFIFVLDYLIIFIS. Over 216–235 the chain is Cytoplasmic; it reads YVLILKTVLSIASREERAKA. Residues 236–256 form a helical membrane-spanning segment; it reads LITCVSHICCVLVFYVTVIGL. The Extracellular segment spans residues 257–271; the sequence is SLIHRFGKQVPHIVH. The helical transmembrane segment at 272-292 threads the bilayer; sequence LIMSYAYFLFPPLMNPITYSV. At 293-312 the chain is on the cytoplasmic side; it reads KTKQIQNAILHLFTTHRIGT.

The protein belongs to the G-protein coupled receptor 1 family.

The protein localises to the cell membrane. Functionally, odorant receptor. The protein is Olfactory receptor 51B5 (OR51B5) of Homo sapiens (Human).